The following is a 65-amino-acid chain: Large ribosomal subunit protein bL32 (65 aa).

This sequence belongs to the bacterial ribosomal protein bL32 family.

This Rickettsia prowazekii (strain Madrid E) protein is Large ribosomal subunit protein bL32 (rpmF).